The chain runs to 333 residues: PRKC apoptosis WT1 regulator protein (333 aa).

4 stretches are compositionally biased toward low complexity: residues 1–14, 33–51, 66–80, and 105–116; these read MATG…STTT, PAGP…PAGS, GPAG…APGA, and PSAAAASGAPGS. Residues 1–262 form a disordered region; sequence MATGGYRSGG…ASFSSSSTLE (262 aa). A B30.2/SPRY domain-binding motif motif is present at residues 62-66; sequence ELNHG. The Nuclear localization signal motif lies at 138–154; sequence RKGKGQIEKRKLREKRR. The segment at 138–196 is selective for apoptosis induction in cancer cells (SAC); the sequence is RKGKGQIEKRKLREKRRSTGVVNIPAAECLDEYEDDEAGQKERKREDAITQQNTIQNEA. T156 carries the post-translational modification Phosphothreonine; by PKA. Positions 175 to 185 are enriched in basic and acidic residues; it reads AGQKERKREDA. Over residues 186 to 196 the composition is skewed to polar residues; sequence ITQQNTIQNEA. S224 is subject to Phosphoserine. Over residues 235 to 248 the composition is skewed to basic and acidic residues; that stretch reads PRTDRSGFSRHNRD. The stretch at 255-333 forms a coiled coil; sequence FSSSSTLEKR…LLKVVGQLTR (79 aa). A leucine-zipper region spans residues 293–333; sequence IGKLKEEIDLLNRDLDDMEDENEQLKQENKTLLKVVGQLTR.

As to quaternary structure, homooligomer. Interacts (via the C-terminal region) with WT1. Interacts with THAP1. Interacts with AATF. Interacts with BACE1. Interacts with SPSB1 (via B30.2/SPRY domain); this interaction is direct and occurs in association with the Elongin BC complex. Interacts with SPSB2 (via B30.2/SPRY domain); this interaction occurs in association with the Elongin BC complex. Interacts with SPSB4 (via B30.2/SPRY domain); this interaction occurs in association with the Elongin BC complex. Component of a ternary complex composed of SQSTM1 and PRKCZ. Interacts with actin. Post-translationally, preferentially phosphorylated at the Thr-156 by PKC in cancer cells.

The protein localises to the cytoplasm. It is found in the nucleus. Pro-apoptotic protein capable of selectively inducing apoptosis in cancer cells, sensitizing the cells to diverse apoptotic stimuli and causing regression of tumors in animal models. Induces apoptosis in certain cancer cells by activation of the Fas prodeath pathway and coparallel inhibition of NF-kappa-B transcriptional activity. Inhibits the transcriptional activation and augments the transcriptional repression mediated by WT1. Down-regulates the anti-apoptotic protein BCL2 via its interaction with WT1. Also seems to be a transcriptional repressor by itself. May be directly involved in regulating the amyloid precursor protein (APP) cleavage activity of BACE1. The protein is PRKC apoptosis WT1 regulator protein (Pawr) of Mus musculus (Mouse).